Consider the following 240-residue polypeptide: 1-(5-phosphoribosyl)-5-[(5-phosphoribosylamino)methylideneamino] imidazole-4-carboxamide isomerase (240 aa).

The active-site Proton acceptor is the aspartate 8. Aspartate 129 acts as the Proton donor in catalysis.

The protein belongs to the HisA/HisF family.

It localises to the cytoplasm. It carries out the reaction 1-(5-phospho-beta-D-ribosyl)-5-[(5-phospho-beta-D-ribosylamino)methylideneamino]imidazole-4-carboxamide = 5-[(5-phospho-1-deoxy-D-ribulos-1-ylimino)methylamino]-1-(5-phospho-beta-D-ribosyl)imidazole-4-carboxamide. The protein operates within amino-acid biosynthesis; L-histidine biosynthesis; L-histidine from 5-phospho-alpha-D-ribose 1-diphosphate: step 4/9. In Clostridioides difficile (strain 630) (Peptoclostridium difficile), this protein is 1-(5-phosphoribosyl)-5-[(5-phosphoribosylamino)methylideneamino] imidazole-4-carboxamide isomerase.